We begin with the raw amino-acid sequence, 589 residues long: Class I diterpene synthase 2, chloroplastic (589 aa).

Residues aspartate 328, aspartate 332, asparagine 472, threonine 476, and glutamate 480 each coordinate Mg(2+). Residues 328–332 carry the DDXXD motif motif; sequence DDFFD.

The protein belongs to the terpene synthase family. The cofactor is Mg(2+). As to expression, mostly expressed in trichomes of leaves and fruits.

The protein resides in the plastid. Its subcellular location is the chloroplast. It catalyses the reaction 9alpha-copalyl diphosphate + H2O = (13S)-vitexifolin A + diphosphate. The enzyme catalyses peregrinol diphosphate = (13R)-9,13-epoxylabd-14-ene + diphosphate. The catalysed reaction is peregrinol diphosphate + H2O = viteagnusin D + diphosphate. The protein operates within secondary metabolite biosynthesis; terpenoid biosynthesis. In terms of biological role, involved in the biosynthesis of labdane-type diterpenoid including cleroda-dienols, and peregrinol lactones and furan derivatives, dopaminergic diterpenoids that can bind to dopamine receptors in the human pituitary gland, have probably ability to lower prolactin levels, and are used to treat menstrual cycle disorders (e.g. premenstrual syndrome and mastodynia). Terpene synthase the catalyzes the conversion of peregrinol diphosphate to viteagnusin D and 9,13(R)-epoxy-labd-14-ene, and of syn-copalyl diphosophate to vitexifolin A. In Vitex agnus-castus (Chaste tree), this protein is Class I diterpene synthase 2, chloroplastic.